Reading from the N-terminus, the 143-residue chain is NADH-quinone oxidoreductase subunit A (143 aa).

A run of 3 helical transmembrane segments spans residues 8–28, 63–83, and 90–110; these read FGNV…GYLT, FYVV…LYPW, and LGVF…LGLV.

The protein belongs to the complex I subunit 3 family. NDH-1 is composed of 14 different subunits. Subunits NuoA, H, J, K, L, M, N constitute the membrane sector of the complex.

It is found in the cell inner membrane. The enzyme catalyses a quinone + NADH + 5 H(+)(in) = a quinol + NAD(+) + 4 H(+)(out). NDH-1 shuttles electrons from NADH, via FMN and iron-sulfur (Fe-S) centers, to quinones in the respiratory chain. The immediate electron acceptor for the enzyme in this species is believed to be a menaquinone. Couples the redox reaction to proton translocation (for every two electrons transferred, four hydrogen ions are translocated across the cytoplasmic membrane), and thus conserves the redox energy in a proton gradient. This is NADH-quinone oxidoreductase subunit A from Chlorobium phaeobacteroides (strain DSM 266 / SMG 266 / 2430).